A 218-amino-acid chain; its full sequence is MPAKLGYWKIRGLQQPVRLFLEYLGEEYEEHLYGRNDREKWLGDKFNMGLDLPNLPYYIDDKCKLTQSVAIMRYIADKHGMLGSTPEERARISMIEGAAMDLRIGFGLTCYNPKFEELKGDYLKGLPTTLKMWSDFLGDRQYLIGSSVSHVDFMVYEALDCIRYLAPQCLDDFPKLKEFKSRIEDLPKIKEYMKSERFIKWPLHSWTSPFGGGDAPPA.

Residues 2–83 form the GST N-terminal domain; that stretch reads PAKLGYWKIR…YIADKHGMLG (82 aa). Glutathione contacts are provided by residues 7-8, 41-45, 54-55, and 67-68; these read YW, WLGDK, NL, and QS. Residues 85 to 203 form the GST C-terminal domain; the sequence is TPEERARISM…KSERFIKWPL (119 aa). Tyrosine 111 is a binding site for substrate.

This sequence belongs to the GST superfamily. Mu family. In terms of assembly, homodimer.

It catalyses the reaction RX + glutathione = an S-substituted glutathione + a halide anion + H(+). Functionally, conjugation of reduced glutathione to a wide number of exogenous and endogenous hydrophobic electrophiles. Its function is as follows. GST isoenzymes appear to play a central role in the parasite detoxification system. Other functions are also suspected including a role in increasing the solubility of haematin in the parasite gut. The protein is Glutathione S-transferase class-mu 26 kDa isozyme 7 of Fasciola hepatica (Liver fluke).